Here is a 1206-residue protein sequence, read N- to C-terminus: Translocase of chloroplast 132, chloroplastic (1206 aa).

Position 2 is an N-acetylglycine (glycine 2). Residues 13–33 are a coiled coil; that stretch reads REDKKLAEDRISDEQVVKNEL. Disordered regions lie at residues 33–75 and 97–119; these read LVRS…SDDL and VGDL…VGES. The span at 39-49 shows a compositional bias: acidic residues; that stretch reads VRDDNEDEVFE. Residue serine 195 is modified to Phosphoserine. The disordered stretch occupies residues 233–499; sequence QTEQEVEEGE…TTTEADEHDE (267 aa). Residues 309-324 show a composition bias toward polar residues; it reads AYTSNIVTNASGDNEV. Low complexity predominate over residues 325–336; sequence SSAVTSSPLEES. Phosphoserine occurs at positions 337, 363, and 398. A compositionally biased stretch (polar residues) spans 357–379; that stretch reads LASSPHSYPESTEVHSNSGSPGV. Positions 403–427 are enriched in basic and acidic residues; the sequence is KELEKQQSSRVHVDPEITENSHVET. The span at 430–440 shows a compositional bias: low complexity; it reads EVVSSVSPTES. Over residues 468–492 the composition is skewed to polar residues; sequence APQQSRVNGNGSHNQFQQAEDSTTT. The AIG1-type G domain occupies 572–801; the sequence is DFSCTIMVLG…KLQDNIPGRP (230 aa). Positions 581–588 are G1; sequence GKSGVGKS. Residues 584 to 589 and 603 to 608 each bind GTP; these read GVGKSA and DAFQMG. Serine 588 serves as a coordination point for Mg(2+). Residues 603-606 are homodimerization; that stretch reads DAFQ. Residues 607 to 611 are G2; it reads MGTKR. Residues 628-631 form a G3 region; the sequence is DTPG. The interval 666 to 671 is homodimerization; it reads RLDMQS. Residues 700–703 are G4; that stretch reads THAA. Residues histidine 701 and 749–750 each bind GTP; that span reads EN. The G5 stretch occupies residues 749–751; sequence ENH. Residues 824-862 are disordered; it reads QPKLPEQQYGDEEDEDDLEESSDSDEESEYDQLPPFKSL. Acidic residues predominate over residues 832–853; it reads YGDEEDEDDLEESSDSDEESEY. The chain crosses the membrane as a helical span at residues 1182–1199; sequence LAMVAIVPLFKKLLSYYY.

This sequence belongs to the TRAFAC class TrmE-Era-EngA-EngB-Septin-like GTPase superfamily. AIG1/Toc34/Toc159-like paraseptin GTPase family. TOC159 subfamily. In terms of assembly, homodimer. Part of the TOC core complex that includes 1 protein for the specific recognition of transit peptides surrounded by a ring composed of four proteins forming translocation channels, and four to five GTP-binding proteins providing energy. This core complex can interact with components of the TIC complex to form a larger import complex. Chloroplastic protein precursor such as prSS (precursor of the RuBisCO small subunit) interacts with these complexes. The TOC complex contains a specific subset of polar lipids such as digalactosyldiacylglyceride (DGDG), phosphatidylcholine (PC) and phosphatidylglycerol (PG). The cofactor is Mg(2+). Post-translationally, phosphorylated by KOC1. In terms of tissue distribution, expressed in seedlings, leaves, flowers, and roots.

It localises to the plastid. The protein localises to the chloroplast outer membrane. It is found in the cytoplasm. In terms of biological role, GTPase involved in protein precursor import into chloroplasts. Seems to recognize chloroplast-destined precursor proteins and regulate their presentation to the translocation channel through GTP hydrolysis. Probably specialized in the import of nuclear encoded non-photosynthetic preproteins from the cytoplasm to the chloroplast. The protein is Translocase of chloroplast 132, chloroplastic of Arabidopsis thaliana (Mouse-ear cress).